Consider the following 128-residue polypeptide: Large ribosomal subunit protein bL20 (128 aa).

The protein belongs to the bacterial ribosomal protein bL20 family.

Binds directly to 23S ribosomal RNA and is necessary for the in vitro assembly process of the 50S ribosomal subunit. It is not involved in the protein synthesizing functions of that subunit. The chain is Large ribosomal subunit protein bL20 from Micrococcus luteus (strain ATCC 4698 / DSM 20030 / JCM 1464 / CCM 169 / CCUG 5858 / IAM 1056 / NBRC 3333 / NCIMB 9278 / NCTC 2665 / VKM Ac-2230) (Micrococcus lysodeikticus).